Here is a 264-residue protein sequence, read N- to C-terminus: 3-methyl-2-oxobutanoate hydroxymethyltransferase (264 aa).

Mg(2+) contacts are provided by D45 and D84. 3-methyl-2-oxobutanoate contacts are provided by residues 45–46, D84, and K112; that span reads DS. E114 serves as a coordination point for Mg(2+). E181 (proton acceptor) is an active-site residue.

Belongs to the PanB family. Homodecamer; pentamer of dimers. Mg(2+) serves as cofactor.

The protein resides in the cytoplasm. It carries out the reaction 3-methyl-2-oxobutanoate + (6R)-5,10-methylene-5,6,7,8-tetrahydrofolate + H2O = 2-dehydropantoate + (6S)-5,6,7,8-tetrahydrofolate. Its pathway is cofactor biosynthesis; (R)-pantothenate biosynthesis; (R)-pantoate from 3-methyl-2-oxobutanoate: step 1/2. Catalyzes the reversible reaction in which hydroxymethyl group from 5,10-methylenetetrahydrofolate is transferred onto alpha-ketoisovalerate to form ketopantoate. This chain is 3-methyl-2-oxobutanoate hydroxymethyltransferase, found in Erwinia tasmaniensis (strain DSM 17950 / CFBP 7177 / CIP 109463 / NCPPB 4357 / Et1/99).